Reading from the N-terminus, the 422-residue chain is Carboxypeptidase B2 (422 aa).

The first 21 residues, 1-21 (MKLHGLGILVAIILYEQHGFA), serve as a signal peptide directing secretion. The propeptide at 22 to 113 (FQSGQVLSAL…QTFNDTVSPR (92 aa)) is activation peptide. N-linked (GlcNAc...) asparagine glycosylation is found at asparagine 43, asparagine 72, asparagine 84, and asparagine 107. The region spanning 121 to 418 (QYHSLNEIYS…AAISKIVWHV (298 aa)) is the Peptidase M14 domain. Cysteine 177 and cysteine 190 are joined by a disulfide. The Zn(2+) site is built by histidine 180 and glutamate 183. Substrate contacts are provided by residues 180–183 (HARE) and arginine 238. Asparagine 240 is a glycosylation site (N-linked (GlcNAc...) asparagine). 2 disulfide bridges follow: cysteine 249–cysteine 273 and cysteine 264–cysteine 278. Substrate is bound at residue 255–256 (NR). Histidine 309 is a Zn(2+) binding site. Residue 310 to 311 (SY) coordinates substrate. Asparagine 322 is a glycosylation site (N-linked (GlcNAc...) asparagine). Residue tyrosine 362 participates in substrate binding. The active-site Proton donor/acceptor is the glutamate 384.

The protein belongs to the peptidase M14 family. The cofactor is Zn(2+). Plasma; synthesized in the liver.

Its subcellular location is the secreted. The catalysed reaction is Release of C-terminal Arg and Lys from a polypeptide.. With respect to regulation, TAFI/CPB2 is unique among carboxypeptidases in that it spontaneously inactivates with a short half-life, a property that is crucial for its role in controlling blood clot lysis. The zymogen is stabilized by interactions with the activation peptide. Release of the activation peptide increases a dynamic flap mobility and in time this leads to conformational changes that disrupt the catalytic site and expose a cryptic thrombin-cleavage site present at Arg-323. Cleaves C-terminal arginine or lysine residues from biologically active peptides such as kinins or anaphylatoxins in the circulation thereby regulating their activities. Down-regulates fibrinolysis by removing C-terminal lysine residues from fibrin that has already been partially degraded by plasmin. The protein is Carboxypeptidase B2 (Cpb2) of Mus musculus (Mouse).